Here is a 386-residue protein sequence, read N- to C-terminus: Bifunctional enzyme IspD/IspF (386 aa).

The segment at 1–229 (MIRGERVIGI…RARALLEAPV (229 aa)) is 2-C-methyl-D-erythritol 4-phosphate cytidylyltransferase. Residues 230–386 (ATGVGYDTHR…AIALLVRAAG (157 aa)) are 2-C-methyl-D-erythritol 2,4-cyclodiphosphate synthase. Positions 236 and 238 each coordinate a divalent metal cation. Residues 236–238 (DTH) and 261–262 (HS) each bind 4-CDP-2-C-methyl-D-erythritol 2-phosphate. Residue His-269 coordinates a divalent metal cation. 4-CDP-2-C-methyl-D-erythritol 2-phosphate is bound by residues 283–285 (DLG), 288–292 (FPDTD), 359–362 (TTGE), Phe-366, and Arg-369.

It in the N-terminal section; belongs to the IspD/TarI cytidylyltransferase family. IspD subfamily. The protein in the C-terminal section; belongs to the IspF family. It depends on a divalent metal cation as a cofactor.

The catalysed reaction is 2-C-methyl-D-erythritol 4-phosphate + CTP + H(+) = 4-CDP-2-C-methyl-D-erythritol + diphosphate. The enzyme catalyses 4-CDP-2-C-methyl-D-erythritol 2-phosphate = 2-C-methyl-D-erythritol 2,4-cyclic diphosphate + CMP. It functions in the pathway isoprenoid biosynthesis; isopentenyl diphosphate biosynthesis via DXP pathway; isopentenyl diphosphate from 1-deoxy-D-xylulose 5-phosphate: step 2/6. It participates in isoprenoid biosynthesis; isopentenyl diphosphate biosynthesis via DXP pathway; isopentenyl diphosphate from 1-deoxy-D-xylulose 5-phosphate: step 4/6. Bifunctional enzyme that catalyzes the formation of 4-diphosphocytidyl-2-C-methyl-D-erythritol from CTP and 2-C-methyl-D-erythritol 4-phosphate (MEP) (IspD), and catalyzes the conversion of 4-diphosphocytidyl-2-C-methyl-D-erythritol 2-phosphate (CDP-ME2P) to 2-C-methyl-D-erythritol 2,4-cyclodiphosphate (ME-CPP) with a corresponding release of cytidine 5-monophosphate (CMP) (IspF). This is Bifunctional enzyme IspD/IspF from Anaeromyxobacter dehalogenans (strain 2CP-C).